Reading from the N-terminus, the 176-residue chain is 3-hydroxyanthranilate 3,4-dioxygenase (176 aa).

R44 is a binding site for O2. Residues H48, E54, and H92 each coordinate Fe cation. E54 lines the substrate pocket. Residues R96 and E106 each coordinate substrate. 4 residues coordinate Fe cation: C121, C124, C158, and C161.

Belongs to the 3-HAO family. Homodimer. Fe(2+) is required as a cofactor.

It carries out the reaction 3-hydroxyanthranilate + O2 = (2Z,4Z)-2-amino-3-carboxymuconate 6-semialdehyde. Its pathway is cofactor biosynthesis; NAD(+) biosynthesis; quinolinate from L-kynurenine: step 3/3. In terms of biological role, catalyzes the oxidative ring opening of 3-hydroxyanthranilate to 2-amino-3-carboxymuconate semialdehyde, which spontaneously cyclizes to quinolinate. This chain is 3-hydroxyanthranilate 3,4-dioxygenase, found in Xanthomonas campestris pv. campestris (strain 8004).